The sequence spans 163 residues: Urease accessory protein UreE (163 aa).

The disordered stretch occupies residues 130-163 (PFEPEPGAYGGGHGHTHSHDHSHQHDPAGHAHEH). Positions 146-163 (HSHDHSHQHDPAGHAHEH) are enriched in basic and acidic residues.

It belongs to the UreE family.

The protein resides in the cytoplasm. In terms of biological role, involved in urease metallocenter assembly. Binds nickel. Probably functions as a nickel donor during metallocenter assembly. The protein is Urease accessory protein UreE of Alkalilimnicola ehrlichii (strain ATCC BAA-1101 / DSM 17681 / MLHE-1).